A 338-amino-acid chain; its full sequence is Lipoate-protein ligase A (338 aa).

The BPL/LPL catalytic domain maps to 29-216 (PATQRVLFLW…AFFAHYGERV (188 aa)). ATP-binding positions include arginine 71, 76 to 79 (GAVF), and lysine 134. Lysine 134 contributes to the (R)-lipoate binding site.

It belongs to the LplA family. In terms of assembly, monomer.

It is found in the cytoplasm. It catalyses the reaction L-lysyl-[lipoyl-carrier protein] + (R)-lipoate + ATP = N(6)-[(R)-lipoyl]-L-lysyl-[lipoyl-carrier protein] + AMP + diphosphate + H(+). It functions in the pathway protein modification; protein lipoylation via exogenous pathway; protein N(6)-(lipoyl)lysine from lipoate: step 1/2. Its pathway is protein modification; protein lipoylation via exogenous pathway; protein N(6)-(lipoyl)lysine from lipoate: step 2/2. In terms of biological role, catalyzes both the ATP-dependent activation of exogenously supplied lipoate to lipoyl-AMP and the transfer of the activated lipoyl onto the lipoyl domains of lipoate-dependent enzymes. The sequence is that of Lipoate-protein ligase A from Escherichia coli O6:K15:H31 (strain 536 / UPEC).